Consider the following 394-residue polypeptide: Elongation factor Tu (394 aa).

The 195-residue stretch at 10 to 204 (KPHINVGTIG…HLDNYIPEPK (195 aa)) folds into the tr-type G domain. The G1 stretch occupies residues 19 to 26 (GHVDHGKT). A GTP-binding site is contributed by 19–26 (GHVDHGKT). Thr-26 provides a ligand contact to Mg(2+). Residues 60–64 (GITIN) are G2. The tract at residues 81-84 (DCPG) is G3. Residues 81–85 (DCPGH) and 136–139 (NKCD) each bind GTP. A G4 region spans residues 136–139 (NKCD). The tract at residues 174-176 (SAL) is G5.

This sequence belongs to the TRAFAC class translation factor GTPase superfamily. Classic translation factor GTPase family. EF-Tu/EF-1A subfamily. Monomer.

It is found in the cytoplasm. The enzyme catalyses GTP + H2O = GDP + phosphate + H(+). Functionally, GTP hydrolase that promotes the GTP-dependent binding of aminoacyl-tRNA to the A-site of ribosomes during protein biosynthesis. The protein is Elongation factor Tu of Wigglesworthia glossinidia brevipalpis.